We begin with the raw amino-acid sequence, 120 residues long: NAD(P)H-quinone oxidoreductase subunit 3, chloroplastic (120 aa).

Transmembrane regions (helical) follow at residues 9–29 (IFWA…LISG), 64–84 (MFAL…PWAM), and 88–108 (VLGV…ILGL).

This sequence belongs to the complex I subunit 3 family. In terms of assembly, NDH is composed of at least 16 different subunits, 5 of which are encoded in the nucleus.

It is found in the plastid. Its subcellular location is the chloroplast thylakoid membrane. It catalyses the reaction a plastoquinone + NADH + (n+1) H(+)(in) = a plastoquinol + NAD(+) + n H(+)(out). It carries out the reaction a plastoquinone + NADPH + (n+1) H(+)(in) = a plastoquinol + NADP(+) + n H(+)(out). Its function is as follows. NDH shuttles electrons from NAD(P)H:plastoquinone, via FMN and iron-sulfur (Fe-S) centers, to quinones in the photosynthetic chain and possibly in a chloroplast respiratory chain. The immediate electron acceptor for the enzyme in this species is believed to be plastoquinone. Couples the redox reaction to proton translocation, and thus conserves the redox energy in a proton gradient. This Draba nemorosa (Woodland whitlowgrass) protein is NAD(P)H-quinone oxidoreductase subunit 3, chloroplastic.